The chain runs to 185 residues: Elongation factor P (185 aa).

The protein belongs to the elongation factor P family.

The protein localises to the cytoplasm. It participates in protein biosynthesis; polypeptide chain elongation. Involved in peptide bond synthesis. Stimulates efficient translation and peptide-bond synthesis on native or reconstituted 70S ribosomes in vitro. Probably functions indirectly by altering the affinity of the ribosome for aminoacyl-tRNA, thus increasing their reactivity as acceptors for peptidyl transferase. The polypeptide is Elongation factor P (Desulfitobacterium hafniense (strain DSM 10664 / DCB-2)).